We begin with the raw amino-acid sequence, 345 residues long: MTIQLPPILIRADHLQTYDERKAIVASALESGYTHIILRPEDEALRHLGRYTAILADGKNLMYSGERIGVLLNLTGAEEMEEAYSLKNAVPNLIISPENWKVIPLENLISRFQNAETSVYICVKTPEEARLAFQTMEVGCDGIVITPDGPADLAAFSGIRNDEYPIVDLETAVVTKISTLSLGDRVCIDTCSLLERGEGMLIGSQSSCLFLVCSESFESEYVNSRPFRVNAGAVHSYILCPDGTTKYLSEIASGNELLSRMPDGNLRTVNVGRVKIEIRPMLYIEAKAGGKTYSVVLQNAETIRLGTPSGAVSVSDLAIGDLVYVRLESGGRHFGHTMAETICEK.

This sequence belongs to the archaeal-type DHQ synthase family.

The enzyme catalyses 2-amino-2,3,7-trideoxy-D-lyxo-hept-6-ulosonate + NAD(+) + H2O = 3-dehydroquinate + NH4(+) + NADH + H(+). In terms of biological role, catalyzes the oxidative deamination and cyclization of 2-amino-3,7-dideoxy-D-threo-hept-6-ulosonic acid (ADH) to yield 3-dehydroquinate (DHQ), which is fed into the canonical shikimic pathway of aromatic amino acid biosynthesis. This is 3-dehydroquinate synthase from Methanocorpusculum labreanum (strain ATCC 43576 / DSM 4855 / Z).